The primary structure comprises 473 residues: Lactate utilization protein B (473 aa).

4Fe-4S ferredoxin-type domains follow at residues 302–332 (GSEF…GHSY) and 351–380 (YDDY…LHDL). Residues C311, C314, C317, C321, C364, C367, and C371 each coordinate [4Fe-4S] cluster.

This sequence belongs to the LutB/YkgF family.

Functionally, is involved in L-lactate degradation and allows cells to grow with lactate as the sole carbon source. Has probably a role as an electron transporter during oxidation of L-lactate. The chain is Lactate utilization protein B from Bacillus cytotoxicus (strain DSM 22905 / CIP 110041 / 391-98 / NVH 391-98).